The sequence spans 128 residues: Large ribosomal subunit protein bL19 (128 aa).

It belongs to the bacterial ribosomal protein bL19 family.

This protein is located at the 30S-50S ribosomal subunit interface and may play a role in the structure and function of the aminoacyl-tRNA binding site. This is Large ribosomal subunit protein bL19 from Aromatoleum aromaticum (strain DSM 19018 / LMG 30748 / EbN1) (Azoarcus sp. (strain EbN1)).